Here is a 303-residue protein sequence, read N- to C-terminus: Methionyl-tRNA formyltransferase (303 aa).

108–111 (SDLP) contacts (6S)-5,6,7,8-tetrahydrofolate.

This sequence belongs to the Fmt family.

It carries out the reaction L-methionyl-tRNA(fMet) + (6R)-10-formyltetrahydrofolate = N-formyl-L-methionyl-tRNA(fMet) + (6S)-5,6,7,8-tetrahydrofolate + H(+). Attaches a formyl group to the free amino group of methionyl-tRNA(fMet). The formyl group appears to play a dual role in the initiator identity of N-formylmethionyl-tRNA by promoting its recognition by IF2 and preventing the misappropriation of this tRNA by the elongation apparatus. The chain is Methionyl-tRNA formyltransferase from Rickettsia felis (strain ATCC VR-1525 / URRWXCal2) (Rickettsia azadi).